A 180-amino-acid chain; its full sequence is MANKLFLVSATLAFFFLLTNASIYRTIVEVDEDDATNPAGPFRIPKCRKEFQQAQHLKACQQWLHKQAMQSGSGPSWTLDGEFDFEDDMENPQGPQQRPPLLQQCCNELHQEEPLCVCPTLKGASKAVKQQVRQQQGQQGQQLQQVISRIYQTATHLPKVCNIPQVSVCPFQKTMPGPSY.

Positions 1–21 (MANKLFLVSATLAFFFLLTNA) are cleaved as a signal peptide. Propeptides lie at residues 22–38 (SIYR…ATNP) and 75–94 (PSWT…NPQG).

It belongs to the 2S seed storage albumins family. As to quaternary structure, the mature protein consists of a small and a large chain linked by disulfide bonds. In terms of tissue distribution, cotyledons and the axis.

Functionally, the small, basic, water-soluble napins are one of the two major kinds of storage proteins synthesized in the seed during its maturation. In Brassica napus (Rape), this protein is Napin (NAP1).